The sequence spans 1196 residues: RNA-dependent RNA polymerase 6 (1196 aa).

This sequence belongs to the RdRP family. As to quaternary structure, interacts with SGS3. Widely expressed.

It is found in the cytoplasmic granule. Its subcellular location is the nucleus. The enzyme catalyses RNA(n) + a ribonucleoside 5'-triphosphate = RNA(n+1) + diphosphate. Its function is as follows. RNA-dependent RNA polymerase involved in post-transcriptional gene silencing (PTGS). Possesses ssRNA and ssDNA-dependent polymerase activity, but does not have priming activity. Possesses in vitro 3' nucleotidyltransferase activity in the presence of UTP as single nucleotide. Required for the production of 21 nucleotide trans-acting small interfering RNAs (ta-siRNAs) derived from TAS1, TAS2 and TAS3 endogenous transcripts. Acts in the RDR6/SGS3/DCL4/AGO7 ta-siRNA pathway involved in leaf developmental timing. Required for the production of natural siRNAs (nat-siRNAs) derived from cis-natural antisense transcripts. Required for the production of 24 nucleotide nat-siRNAs derived from the stress-related P5CDH-SRO5 antisense gene pair. Required for PTGS induced by transgene direct repeats. Plays an essential role in transitive silencing of transgenes by processing secondary siRNAs. This pathway, which requires DCL2 and DCL4, amplifies silencing by using the target RNA as substrate to generate secondary siRNAs, providing an efficient mechanism for long-distance silencing. Involved in the biogenesis of secondary siRNAs which require 22 nucleotide miRNAs associated to AGO1. Participates synergistically with AS1 and AS2 to proper plant development by repressing the miR165 and miR166 microRNAs (independently of AGO10) that may lead to mRNA degradation of genes in the class III HD-ZIP family. Required for the production of some small RNAs derived from the crucifer-infecting tobamovirus (TMV-cg). Required for sense virus-induced post-transcriptional gene silencing (S-PTGS). The protein is RNA-dependent RNA polymerase 6 (RDR6) of Arabidopsis thaliana (Mouse-ear cress).